The following is a 284-amino-acid chain: Bifunctional protein FolD (284 aa).

NADP(+) is bound by residues 166–168 and Ile232; that span reads GAS.

This sequence belongs to the tetrahydrofolate dehydrogenase/cyclohydrolase family. In terms of assembly, homodimer.

It carries out the reaction (6R)-5,10-methylene-5,6,7,8-tetrahydrofolate + NADP(+) = (6R)-5,10-methenyltetrahydrofolate + NADPH. The catalysed reaction is (6R)-5,10-methenyltetrahydrofolate + H2O = (6R)-10-formyltetrahydrofolate + H(+). Its pathway is one-carbon metabolism; tetrahydrofolate interconversion. In terms of biological role, catalyzes the oxidation of 5,10-methylenetetrahydrofolate to 5,10-methenyltetrahydrofolate and then the hydrolysis of 5,10-methenyltetrahydrofolate to 10-formyltetrahydrofolate. The sequence is that of Bifunctional protein FolD from Shewanella sp. (strain MR-7).